Reading from the N-terminus, the 577-residue chain is Adenine deaminase (577 aa).

It belongs to the metallo-dependent hydrolases superfamily. Adenine deaminase family. Mn(2+) serves as cofactor.

The enzyme catalyses adenine + H2O + H(+) = hypoxanthine + NH4(+). The chain is Adenine deaminase from Bacillus velezensis (strain DSM 23117 / BGSC 10A6 / LMG 26770 / FZB42) (Bacillus amyloliquefaciens subsp. plantarum).